A 283-amino-acid polypeptide reads, in one-letter code: Succinate dehydrogenase [ubiquinone] iron-sulfur subunit, mitochondrial (283 aa).

The region spanning 66-145 (KKPTLQTYSI…PVKIYPLPHM (80 aa)) is the 2Fe-2S ferredoxin-type domain. Cysteine 105, cysteine 110, cysteine 113, and cysteine 125 together coordinate [2Fe-2S] cluster. Residues 186–216 (DRKKLDGMYECILCACCSTSCPSYWWNQDEY) enclose the 4Fe-4S ferredoxin-type domain. The [4Fe-4S] cluster site is built by cysteine 196, cysteine 199, and cysteine 202. Residue cysteine 206 coordinates [3Fe-4S] cluster. An a ubiquinone-binding site is contributed by tryptophan 211. The [3Fe-4S] cluster site is built by cysteine 253 and cysteine 259. A [4Fe-4S] cluster-binding site is contributed by cysteine 263.

It belongs to the succinate dehydrogenase/fumarate reductase iron-sulfur protein family. In terms of assembly, component of complex II composed of four subunits: a flavoprotein (FP), an iron-sulfur protein (IP), and a cytochrome b composed of a large and a small subunit. Requires [2Fe-2S] cluster as cofactor. The cofactor is [3Fe-4S] cluster. [4Fe-4S] cluster serves as cofactor.

It is found in the mitochondrion inner membrane. The enzyme catalyses a quinone + succinate = fumarate + a quinol. The protein operates within carbohydrate metabolism; tricarboxylic acid cycle; fumarate from succinate (eukaryal route): step 1/1. Functionally, iron-sulfur protein (IP) subunit of succinate dehydrogenase (SDH) that is involved in complex II of the mitochondrial electron transport chain and is responsible for transferring electrons from succinate to ubiquinone (coenzyme Q). The chain is Succinate dehydrogenase [ubiquinone] iron-sulfur subunit, mitochondrial (SDH2) from Uromyces fabae (Rust fungus).